A 36-amino-acid chain; its full sequence is uncharacterized protein (36 aa).

Polar residues predominate over residues 1–14; that stretch reads MNQLGSGPTKQGVA. The interval 1 to 36 is disordered; sequence MNQLGSGPTKQGVATNTGSTGTTKNNSNLSGKGWVL. A compositionally biased stretch (low complexity) spans 15–36; that stretch reads TNTGSTGTTKNNSNLSGKGWVL.

This is an uncharacterized protein from Dictyostelium discoideum (Social amoeba).